We begin with the raw amino-acid sequence, 586 residues long: Aspartate--tRNA ligase (586 aa).

Glu171 contributes to the L-aspartate binding site. Positions 195–198 are aspartate; sequence QLFK. Arg217 is an L-aspartate binding site. ATP is bound by residues 217 to 219 and Gln226; that span reads RDE. His448 serves as a coordination point for L-aspartate. Glu482 serves as a coordination point for ATP. Arg489 lines the L-aspartate pocket. 534–537 is an ATP binding site; the sequence is GLDR.

This sequence belongs to the class-II aminoacyl-tRNA synthetase family. Type 1 subfamily. As to quaternary structure, homodimer.

Its subcellular location is the cytoplasm. It catalyses the reaction tRNA(Asp) + L-aspartate + ATP = L-aspartyl-tRNA(Asp) + AMP + diphosphate. Functionally, catalyzes the attachment of L-aspartate to tRNA(Asp) in a two-step reaction: L-aspartate is first activated by ATP to form Asp-AMP and then transferred to the acceptor end of tRNA(Asp). This is Aspartate--tRNA ligase from Buchnera aphidicola subsp. Acyrthosiphon pisum (strain 5A).